A 297-amino-acid polypeptide reads, in one-letter code: GTPase Era (297 aa).

One can recognise an Era-type G domain in the interval 7–174; sequence RSGFVSIVGR…VQLVHGLLPE (168 aa). A G1 region spans residues 15-22; sequence GRPNVGKS. GTP is bound at residue 15-22; the sequence is GRPNVGKS. Residues 41-45 form a G2 region; it reads QTTRN. The tract at residues 62-65 is G3; it reads DTPG. Residues 62-66 and 124-127 contribute to the GTP site; these read DTPGI and NKID. A G4 region spans residues 124 to 127; it reads NKID. Positions 153-155 are G5; the sequence is VSA. The KH type-2 domain maps to 205–282; sequence THDEVPYSTA…FLELFVRVSG (78 aa).

This sequence belongs to the TRAFAC class TrmE-Era-EngA-EngB-Septin-like GTPase superfamily. Era GTPase family. In terms of assembly, monomer.

It localises to the cytoplasm. Its subcellular location is the cell inner membrane. Functionally, an essential GTPase that binds both GDP and GTP, with rapid nucleotide exchange. Plays a role in 16S rRNA processing and 30S ribosomal subunit biogenesis and possibly also in cell cycle regulation and energy metabolism. This chain is GTPase Era, found in Geobacter sp. (strain M21).